Here is a 134-residue protein sequence, read N- to C-terminus: Profilin (134 aa).

Belongs to the profilin family. Occurs in many kinds of cells as a complex with monomeric actin in a 1:1 ratio.

The protein localises to the cytoplasm. The protein resides in the cytoskeleton. In terms of biological role, binds to actin and affects the structure of the cytoskeleton. At high concentrations, profilin prevents the polymerization of actin, whereas it enhances it at low concentrations. By binding to PIP2, it inhibits the formation of IP3 and DG. The polypeptide is Profilin (Daucus carota (Wild carrot)).